Here is a 453-residue protein sequence, read N- to C-terminus: Dibenzothiophene-sulfone monooxygenase (453 aa).

FMN-binding residues include aspartate 59, threonine 106, histidine 156, tyrosine 160, and serine 231.

The protein belongs to the NtaA/SnaA/DszA monooxygenase family. In terms of assembly, homodimer.

It localises to the cytoplasm. The enzyme catalyses dibenzothiophene 5,5-dioxide + FMNH2 + NADH + O2 = 2'-hydroxybiphenyl-2-sulfinate + FMN + NAD(+) + H2O + H(+). Its pathway is sulfur metabolism; dibenzothiophene degradation. Its function is as follows. Catalyzes the second step of the '4S' desulfurization pathway that removes covalently bound sulfur from dibenzothiophene (DBT) without breaking carbon-carbon bonds. Metabolizes DBT-sulfone (DBTO2 or DBT 5,5-dioxide) to 2-(2'-hydroxyphenyl)benzene sulphinate (HBPS). This is Dibenzothiophene-sulfone monooxygenase from Rhodococcus erythropolis (strain XP).